Consider the following 275-residue polypeptide: MPICTTRDGVEIFYKDWGQGRPVVFIHGWPLNGDAWQDQLKAVVDAGYRGIAHDRRGHGHSTPVWDGYDFDTFADDLNDLLTDLDLRDVTLVAHSMGGGELARYVGRHGTGRLRSAVLLSAIPPVMIKSDKNPDGVPDEVFDALKNGVLTERSQFWKDTAEGFFSANRPGNKVTQGNKDAFWYMAMAQTIEGGVRCVDAFGYTDFTEDLKKFDIPTLVVHGDDDQVVPIDATGRKSAQIIPNAELKVYEGSSHGIAMVPGDKEKFNRDLLEFLNK.

The AB hydrolase-1 domain occupies 22–255; sequence PVVFIHGWPL…KVYEGSSHGI (234 aa). Active-site charge relay system residues include Ser95, Asp224, and His253.

Belongs to the AB hydrolase superfamily. Bacterial non-heme haloperoxidase / perhydrolase family. As to quaternary structure, homodimer.

Its activity is regulated as follows. Brominating activity not inhibited by azide, peroxidase activity stimulated by bromide. Its function is as follows. May be a chlorinating enzyme involved in 7-chlorotetracycline biosynthesis. Able to brominate as well. This chain is Non-heme chloroperoxidase CPO-A1 (bpoA1), found in Kitasatospora aureofaciens (Streptomyces aureofaciens).